The chain runs to 174 residues: Peptide methionine sulfoxide reductase MsrA (174 aa).

C10 is a catalytic residue.

The protein belongs to the MsrA Met sulfoxide reductase family.

It carries out the reaction L-methionyl-[protein] + [thioredoxin]-disulfide + H2O = L-methionyl-(S)-S-oxide-[protein] + [thioredoxin]-dithiol. The catalysed reaction is [thioredoxin]-disulfide + L-methionine + H2O = L-methionine (S)-S-oxide + [thioredoxin]-dithiol. Functionally, has an important function as a repair enzyme for proteins that have been inactivated by oxidation. Catalyzes the reversible oxidation-reduction of methionine sulfoxide in proteins to methionine. The sequence is that of Peptide methionine sulfoxide reductase MsrA from Acinetobacter baumannii (strain SDF).